Reading from the N-terminus, the 98-residue chain is uncharacterized protein (98 aa).

Residues 53–98 (AALEGGRHRHRGESASGNGIQHGVPPNVALIPSGSTLLTPARSGHV) are disordered.

This is an uncharacterized protein from Mycolicibacterium smegmatis (strain ATCC 700084 / mc(2)155) (Mycobacterium smegmatis).